The following is a 723-amino-acid chain: Multiple organellar RNA editing factor 4, mitochondrial (723 aa).

The N-terminal 64 residues, 1–64, are a transit peptide targeting the mitochondrion; it reads MAMFSHRLRR…RLFSTTQYQY (64 aa). Disordered regions lie at residues 180–303, 318–474, and 663–723; these read ITPG…GQTQ, RQEM…EGQP, and QNGG…NSRI. The segment covering 191 to 204 has biased composition (basic and acidic residues); sequence EGFDSLKKESKPEQ. 4 stretches are compositionally biased toward polar residues: residues 219–233, 273–303, 327–365, and 373–430; these read TSGQ…TLPD, GQWQ…GQTQ, GQAQ…QGAQ, and QGAQ…NYSP. Low complexity-rich tracts occupy residues 459-474 and 682-695; these read QGQG…EGQP and QGFS…TFQQ. Residues 714 to 723 show a composition bias toward basic and acidic residues; sequence TETRKPNSRI.

The protein belongs to the MORF family. As to quaternary structure, heterodimers with MORF8/RIP1, MORF1/RIP8 and MORF3/RIP3.

It localises to the mitochondrion. Functionally, involved in organellar RNA editing. Required for the processing of few RNA editing site in mitochondria. This is Multiple organellar RNA editing factor 4, mitochondrial from Arabidopsis thaliana (Mouse-ear cress).